The sequence spans 419 residues: Glutamyl-tRNA reductase (419 aa).

Residues 49-52 (TCNR), serine 107, 112-114 (EPQ), and glutamine 118 each bind substrate. Cysteine 50 acts as the Nucleophile in catalysis. 187–192 (GAGETI) serves as a coordination point for NADP(+).

This sequence belongs to the glutamyl-tRNA reductase family. As to quaternary structure, homodimer.

It catalyses the reaction (S)-4-amino-5-oxopentanoate + tRNA(Glu) + NADP(+) = L-glutamyl-tRNA(Glu) + NADPH + H(+). The protein operates within porphyrin-containing compound metabolism; protoporphyrin-IX biosynthesis; 5-aminolevulinate from L-glutamyl-tRNA(Glu): step 1/2. Functionally, catalyzes the NADPH-dependent reduction of glutamyl-tRNA(Glu) to glutamate 1-semialdehyde (GSA). The protein is Glutamyl-tRNA reductase of Psychromonas ingrahamii (strain DSM 17664 / CCUG 51855 / 37).